We begin with the raw amino-acid sequence, 407 residues long: MTQETTTLTGQSPPPVRDWPALDLDGPEFDPVLAELMREGPLTRVRLPHGEGWAWLATRYDDVKAITNDPRFGRAEVTQRQITRLAPHFKPRPGSLAFADQPDHNRLRRAVAGAFTVGATKRLRPRAQEILDGLVDGILAEGPPADLVERVLEPFPIAVVSEVMGVPAADRERVHSWTRQIISTSGGAEAAERAKRGLYGWITETVRARAGSEGGDVYSMLGAAVGRGEVGETEAVGLAGPLQIGGEAVTHNVGQMLYLLLTRRELMARMRERPGARGTALDELLRWISHRTSVGLARIALEDVEVHGTRIAAGEPVYVSYLAANRDPDVFPDPDRIDLDRDPNPHLAYGNGHHFCTGAVLARMQTELLVDTLLERLPGLRLAVPAEQVAWRRKTMIRGPRTLPCTW.

Positions 1–11 (MTQETTTLTGQ) are enriched in polar residues. Positions 1 to 20 (MTQETTTLTGQSPPPVRDWP) are disordered. Flaviolin contacts are provided by residues R92, Y199, and 290–291 (HR). C356 contributes to the heme binding site.

This sequence belongs to the cytochrome P450 family. Heme serves as cofactor.

The catalysed reaction is 2 flaviolin + 2 reduced [2Fe-2S]-[ferredoxin] + O2 + H(+) = 3,3'-biflaviolin + 2 oxidized [2Fe-2S]-[ferredoxin] + 2 H2O. The enzyme catalyses 2 flaviolin + 2 reduced [2Fe-2S]-[ferredoxin] + O2 + H(+) = 3,8'-biflaviolin + 2 oxidized [2Fe-2S]-[ferredoxin] + 2 H2O. It functions in the pathway pigment biosynthesis. Its function is as follows. Catalyzes oxidative C-C coupling reaction to polymerize flaviolin and form highly conjugated pigments which protect the soil bacterium from deleterious effects of UV irradiation (two isomers of biflaviolin and one triflaviolin). The polypeptide is Biflaviolin synthase CYP158A1 (Streptomyces coelicolor (strain ATCC BAA-471 / A3(2) / M145)).